The sequence spans 878 residues: Phosphoenolpyruvate carboxylase (878 aa).

Catalysis depends on residues H140 and K545.

Belongs to the PEPCase type 1 family. The cofactor is Mg(2+).

It catalyses the reaction oxaloacetate + phosphate = phosphoenolpyruvate + hydrogencarbonate. Its function is as follows. Forms oxaloacetate, a four-carbon dicarboxylic acid source for the tricarboxylic acid cycle. The chain is Phosphoenolpyruvate carboxylase from Ectopseudomonas mendocina (strain ymp) (Pseudomonas mendocina).